Reading from the N-terminus, the 439-residue chain is Tol-Pal system protein TolB (439 aa).

Residues 1-21 (MRFRLALSLLSLALFAAPAAA) form the signal peptide.

It belongs to the TolB family. In terms of assembly, the Tol-Pal system is composed of five core proteins: the inner membrane proteins TolA, TolQ and TolR, the periplasmic protein TolB and the outer membrane protein Pal. They form a network linking the inner and outer membranes and the peptidoglycan layer.

It localises to the periplasm. In terms of biological role, part of the Tol-Pal system, which plays a role in outer membrane invagination during cell division and is important for maintaining outer membrane integrity. The chain is Tol-Pal system protein TolB from Rhizorhabdus wittichii (strain DSM 6014 / CCUG 31198 / JCM 15750 / NBRC 105917 / EY 4224 / RW1) (Sphingomonas wittichii).